Consider the following 207-residue polypeptide: Ribonuclease HII (207 aa).

One can recognise an RNase H type-2 domain in the interval 12–201; sequence ALVAGVDEVG…VRELLDVVSI (190 aa). A divalent metal cation is bound by residues D18, E19, and D110.

It belongs to the RNase HII family. Requires Mn(2+) as cofactor. Mg(2+) is required as a cofactor.

The protein localises to the cytoplasm. It catalyses the reaction Endonucleolytic cleavage to 5'-phosphomonoester.. In terms of biological role, endonuclease that specifically degrades the RNA of RNA-DNA hybrids. This is Ribonuclease HII from Azotobacter vinelandii (strain DJ / ATCC BAA-1303).